Consider the following 935-residue polypeptide: Protein HIRA (935 aa).

WD repeat units lie at residues 14–58 (HDTG…DKKK), 72–111 (ESQSQSNSCRWSPDGKRFAFGSDDSSVSVWEYVGLINSMG), 131–170 (GHSMEVLTVEWSPNGKYLASGSIDYRIIIYNARKLPDRIT), 174–213 (DIQLPVKGLSWDPIGKYLASLEGDKKLRFWATDSWQCVKS), 222–261 (IEETMLTRLDWSPDGKYLMTPAAVRSGKPLIKLIQRQTWK), 277–320 (RAMP…KPLF), and 325–362 (IFNHTVMDFAWCGRNLLACSQDGTVKVIHLSESVIGEM). The interval 431 to 556 (SSDIQLTKSM…RNKKRKVPAT (126 aa)) is disordered. The span at 439–468 (SMEDNSKENESKNSEKTMMEERNKQIDVRK) shows a compositional bias: basic and acidic residues. Residues 480 to 492 (GTTTADPMTSLSS) are compositionally biased toward polar residues. Residues 520–542 (DLEDSSDSDDDDEEEEEDMEISD) are compositionally biased toward acidic residues.

Belongs to the WD repeat HIR1 family.

It is found in the nucleus. Required for replication-independent chromatin assembly and for the periodic repression of histone gene transcription during the cell cycle. In Caenorhabditis elegans, this protein is Protein HIRA.